A 413-amino-acid chain; its full sequence is Putative glutamate synthase [NADPH] small chain (413 aa).

Residues Cys-33, Cys-37, Cys-43, and Cys-47 each coordinate [4Fe-4S] cluster.

In terms of assembly, aggregate of 4 catalytic active heterodimers, consisting of a large and a small subunit. Requires [4Fe-4S] cluster as cofactor.

The catalysed reaction is 2 L-glutamate + NADP(+) = L-glutamine + 2-oxoglutarate + NADPH + H(+). The protein operates within amino-acid biosynthesis; L-glutamate biosynthesis via GLT pathway; L-glutamate from 2-oxoglutarate and L-glutamine (NADP(+) route): step 1/1. Its pathway is energy metabolism; nitrogen metabolism. The protein is Putative glutamate synthase [NADPH] small chain (gltD) of Cereibacter sphaeroides (Rhodobacter sphaeroides).